Here is a 180-residue protein sequence, read N- to C-terminus: Protein GrpE (180 aa).

A disordered region spans residues 1–25; the sequence is MSKKKAEDKQPIIKDEAVEEPKSDS.

This sequence belongs to the GrpE family. In terms of assembly, homodimer.

It is found in the cytoplasm. In terms of biological role, participates actively in the response to hyperosmotic and heat shock by preventing the aggregation of stress-denatured proteins, in association with DnaK and GrpE. It is the nucleotide exchange factor for DnaK and may function as a thermosensor. Unfolded proteins bind initially to DnaJ; upon interaction with the DnaJ-bound protein, DnaK hydrolyzes its bound ATP, resulting in the formation of a stable complex. GrpE releases ADP from DnaK; ATP binding to DnaK triggers the release of the substrate protein, thus completing the reaction cycle. Several rounds of ATP-dependent interactions between DnaJ, DnaK and GrpE are required for fully efficient folding. The polypeptide is Protein GrpE (Fructilactobacillus sanfranciscensis (Lactobacillus sanfranciscensis)).